The following is a 713-amino-acid chain: Zinc finger and BTB domain-containing protein 1 (713 aa).

Residue Lys3 forms a Glycyl lysine isopeptide (Lys-Gly) (interchain with G-Cter in SUMO2) linkage. The BTB domain occupies Cys24–Pro91. Glycyl lysine isopeptide (Lys-Gly) (interchain with G-Cter in SUMO2) cross-links involve residues Lys200 and Lys205. The C2H2-type 1; atypical zinc-finger motif lies at Phe216–His242. Residues Lys261, Lys266, Lys276, Lys284, Lys304, Lys316, Lys328, Lys340, and Lys346 each participate in a glycyl lysine isopeptide (Lys-Gly) (interchain with G-Cter in SUMO2) cross-link. Residues Ala270–Ala319 are disordered. The residue at position 355 (Ser355) is a Phosphoserine. Thr356 is subject to Phosphothreonine. Residue Lys381 forms a Glycyl lysine isopeptide (Lys-Gly) (interchain with G-Cter in SUMO2) linkage. A C2H2-type 2; atypical zinc finger spans residues Cys448 to Cys470. Lys528 is covalently cross-linked (Glycyl lysine isopeptide (Lys-Gly) (interchain with G-Cter in SUMO2)). The UBZ-type zinc-finger motif lies at Pro533–Asp558. Lys563 participates in a covalent cross-link: Glycyl lysine isopeptide (Lys-Gly) (interchain with G-Cter in SUMO2). C2H2-type zinc fingers lie at residues His578 to His600, Phe606 to His628, Tyr634 to His656, Thr662 to His684, and Tyr686 to His709.

As to quaternary structure, homodimer. Homodimer. Interacts (via BTB domain) with TRIM28 (unphosphorylated or phosphorylated form). Sumoylated with SUMO2 at Lys-328 and to a lesser extent at Lys-266. Sumoylation inhibits its transcriptional repression activity and regulates its subcellular localization. Expressed strongly in thymus and spleen, less in lymph nodes and peripheral blood mononuclear cells (PBMCs) and weakly in bone marrow. Strongly expressed in immature, but weakly in mature bone marrow-lymphocyte B.

It localises to the nucleus. The protein localises to the nucleoplasm. Acts as a transcriptional repressor. Represses cAMP-responsive element (CRE)-mediated transcriptional activation. In addition, has a role in translesion DNA synthesis. Requires for UV-inducible RAD18 loading, PCNA monoubiquitination, POLH recruitment to replication factories and efficient translesion DNA synthesis. Plays a key role in the transcriptional regulation of T lymphocyte development. In Mus musculus (Mouse), this protein is Zinc finger and BTB domain-containing protein 1 (Zbtb1).